The primary structure comprises 64 residues: Bacteriocin plantaricin ASM1 (64 aa).

Positions 1–21 (MSKLVKTLTVDEISKIQTNGG) are cleaved as a signal peptide. A cross-link (lanthionine (Ser-Cys)) is located at residues 61–64 (SYHC).

In terms of processing, contains 2 disulfide bonds.

The protein localises to the secreted. Functionally, bacteriocin with a narrow antibacterial spectrum. Antibacterial activity against the Gram-positive bacteria L.plantarun, L.pentosus, L.curvatus, L.lindneri, L.mesenteroides and E.faecilis. Lacks antibacterial activity against the Gram-positive bacteria L.brevis, L.sakei, L.lactis, P.acidilactici, B.subtilis, B.cereus, L.monocytogenes and S.aureus, and against the Gram-negative bacteria E.coli and S.typhimurium. The chain is Bacteriocin plantaricin ASM1 from Lactiplantibacillus plantarum (Lactobacillus plantarum).